Here is a 304-residue protein sequence, read N- to C-terminus: Glycine--tRNA ligase alpha subunit (304 aa).

It belongs to the class-II aminoacyl-tRNA synthetase family. In terms of assembly, tetramer of two alpha and two beta subunits.

The protein resides in the cytoplasm. It catalyses the reaction tRNA(Gly) + glycine + ATP = glycyl-tRNA(Gly) + AMP + diphosphate. The chain is Glycine--tRNA ligase alpha subunit from Photorhabdus laumondii subsp. laumondii (strain DSM 15139 / CIP 105565 / TT01) (Photorhabdus luminescens subsp. laumondii).